Here is a 521-residue protein sequence, read N- to C-terminus: Glucose-1-phosphate adenylyltransferase large subunit 2, chloroplastic/amyloplastic (521 aa).

A chloroplast-targeting transit peptide spans 1-47; sequence MQFSSVLPLEGKACMSPVRRGSGGYGSERMRINCCSIRRNKALRRMC.

It belongs to the bacterial/plant glucose-1-phosphate adenylyltransferase family. As to quaternary structure, heterotetramer. As to expression, abundant in the embryo and is also present in the endosperm.

The protein localises to the plastid. It is found in the chloroplast. The protein resides in the amyloplast. The enzyme catalyses alpha-D-glucose 1-phosphate + ATP + H(+) = ADP-alpha-D-glucose + diphosphate. It participates in glycan biosynthesis; starch biosynthesis. With respect to regulation, activated by 3'phosphoglycerate, inhibited by orthophosphate. Allosteric regulation. This protein plays a role in synthesis of starch. It catalyzes the synthesis of the activated glycosyl donor, ADP-glucose from Glc-1-P and ATP. In Zea mays (Maize), this protein is Glucose-1-phosphate adenylyltransferase large subunit 2, chloroplastic/amyloplastic (AGP2).